A 668-amino-acid chain; its full sequence is tRNA 5-methylaminomethyl-2-thiouridine biosynthesis bifunctional protein MnmC (668 aa).

The segment at 1–245 (MKHYSIQPAN…KREMLCGVME (245 aa)) is tRNA (mnm(5)s(2)U34)-methyltransferase. Positions 270-668 (IGGGIASALL…LLKGKAVKAG (399 aa)) are FAD-dependent cmnm(5)s(2)U34 oxidoreductase.

This sequence in the N-terminal section; belongs to the methyltransferase superfamily. tRNA (mnm(5)s(2)U34)-methyltransferase family. In the C-terminal section; belongs to the DAO family. FAD serves as cofactor.

It localises to the cytoplasm. The enzyme catalyses 5-aminomethyl-2-thiouridine(34) in tRNA + S-adenosyl-L-methionine = 5-methylaminomethyl-2-thiouridine(34) in tRNA + S-adenosyl-L-homocysteine + H(+). Its function is as follows. Catalyzes the last two steps in the biosynthesis of 5-methylaminomethyl-2-thiouridine (mnm(5)s(2)U) at the wobble position (U34) in tRNA. Catalyzes the FAD-dependent demodification of cmnm(5)s(2)U34 to nm(5)s(2)U34, followed by the transfer of a methyl group from S-adenosyl-L-methionine to nm(5)s(2)U34, to form mnm(5)s(2)U34. In Escherichia coli O9:H4 (strain HS), this protein is tRNA 5-methylaminomethyl-2-thiouridine biosynthesis bifunctional protein MnmC.